We begin with the raw amino-acid sequence, 316 residues long: Thymidylate synthase (316 aa).

DUMP is bound by residues Arg-23 and Arg-178–Arg-179. Cys-198 acts as the Nucleophile in catalysis. Residues Arg-218–Asp-221, Asn-229, and His-259–Tyr-261 contribute to the dUMP site. Asp-221 serves as a coordination point for (6R)-5,10-methylene-5,6,7,8-tetrahydrofolate. Ala-315 serves as a coordination point for (6R)-5,10-methylene-5,6,7,8-tetrahydrofolate.

It belongs to the thymidylate synthase family. Bacterial-type ThyA subfamily. In terms of assembly, homodimer.

It localises to the cytoplasm. The catalysed reaction is dUMP + (6R)-5,10-methylene-5,6,7,8-tetrahydrofolate = 7,8-dihydrofolate + dTMP. It participates in pyrimidine metabolism; dTTP biosynthesis. Catalyzes the reductive methylation of 2'-deoxyuridine-5'-monophosphate (dUMP) to 2'-deoxythymidine-5'-monophosphate (dTMP) while utilizing 5,10-methylenetetrahydrofolate (mTHF) as the methyl donor and reductant in the reaction, yielding dihydrofolate (DHF) as a by-product. This enzymatic reaction provides an intracellular de novo source of dTMP, an essential precursor for DNA biosynthesis. This chain is Thymidylate synthase, found in Latilactobacillus sakei subsp. sakei (strain 23K) (Lactobacillus sakei subsp. sakei).